The primary structure comprises 183 residues: Large ribosomal subunit protein uL10 (183 aa).

The protein belongs to the universal ribosomal protein uL10 family. As to quaternary structure, part of the ribosomal stalk of the 50S ribosomal subunit. The N-terminus interacts with L11 and the large rRNA to form the base of the stalk. The C-terminus forms an elongated spine to which L12 dimers bind in a sequential fashion forming a multimeric L10(L12)X complex.

Its function is as follows. Forms part of the ribosomal stalk, playing a central role in the interaction of the ribosome with GTP-bound translation factors. The protein is Large ribosomal subunit protein uL10 of Mesomycoplasma hyopneumoniae (strain 232) (Mycoplasma hyopneumoniae).